A 215-amino-acid polypeptide reads, in one-letter code: Protein transport protein sec22 (215 aa).

At Met-1–Gln-194 the chain is on the cytoplasmic side. In terms of domain architecture, Longin spans Arg-9 to Met-118. In terms of domain architecture, v-SNARE coiled-coil homology spans Asn-133–Arg-193. The helical; Anchor for type IV membrane protein transmembrane segment at Tyr-195–Ala-215 threads the bilayer.

Belongs to the synaptobrevin family. In terms of assembly, component of two distinct SNARE complexes consisting of sed5, bos1, bet1 and sec22 or ufe1, use1, sec20 and sec22. Ykt6 can probably replace sec22 as subunit of either complex.

It localises to the membrane. Its subcellular location is the endoplasmic reticulum membrane. The protein resides in the golgi apparatus membrane. Its function is as follows. Nonessential SNARE involved in targeting and fusion of ER-derived transport vesicles with the Golgi complex as well as Golgi-derived retrograde transport vesicles with the ER. The protein is Protein transport protein sec22 (sec22) of Schizosaccharomyces pombe (strain 972 / ATCC 24843) (Fission yeast).